A 422-amino-acid polypeptide reads, in one-letter code: C-type lectin domain family 4 member M (422 aa).

At 1–49 the chain is on the cytoplasmic side; that stretch reads MSDSKEPRVQPLGLLEEDPTTSGIRLFPRDFQFQQTHGHKSSTGCLGHG. The Endocytosis signal signature appears at 14–15; that stretch reads LL. Residues 50–70 traverse the membrane as a helical; Signal-anchor for type II membrane protein segment; sequence PLVLQLLSFALLAGVLVAILV. Topologically, residues 71 to 422 are extracellular; the sequence is QVYKVPSSLS…KKPIACFRDE (352 aa). N-linked (GlcNAc...) asparagine glycosylation is present at asparagine 92. A run of 8 repeats spans residues 108–130, 131–151, 154–176, 177–199, 200–222, 223–245, 246–268, and 269–291. Residues 108–292 form an 8 X approximate tandem repeats region; it reads KLQEIYQELT…AFERLCCRCP (185 aa). Cystine bridges form between cysteine 288/cysteine 418, cysteine 291/cysteine 302, cysteine 319/cysteine 412, and cysteine 391/cysteine 404. The region spanning 297-413 is the C-type lectin domain; it reads FFQGNCYFMS…CNVDNYWICK (117 aa). Positions 382, 384, 386, 389, 400, and 401 each coordinate Ca(2+). Asparagine 384 is a glycosylation site (N-linked (GlcNAc...) asparagine).

As to quaternary structure, homotetramer.

It localises to the membrane. Its function is as follows. Probable pathogen-recognition receptor involved in peripheral immune surveillance in liver. May mediate the endocytosis of pathogens which are subsequently degraded in lysosomal compartments. Probably recognizes in a calcium-dependent manner high mannose N-linked oligosaccharides in a variety of pathogen antigens. Is a receptor for ICAM3, probably by binding to mannose-like carbohydrates. The polypeptide is C-type lectin domain family 4 member M (CLEC4M) (Symphalangus syndactylus (Siamang)).